We begin with the raw amino-acid sequence, 617 residues long: Dihydroxy-acid dehydratase (617 aa).

Mg(2+) is bound at residue D81. C122 is a binding site for [2Fe-2S] cluster. 2 residues coordinate Mg(2+): D123 and K124. The residue at position 124 (K124) is an N6-carboxylysine. C195 serves as a coordination point for [2Fe-2S] cluster. Residue E491 coordinates Mg(2+). The Proton acceptor role is filled by S517.

This sequence belongs to the IlvD/Edd family. As to quaternary structure, homodimer. It depends on [2Fe-2S] cluster as a cofactor. The cofactor is Mg(2+).

It catalyses the reaction (2R)-2,3-dihydroxy-3-methylbutanoate = 3-methyl-2-oxobutanoate + H2O. The catalysed reaction is (2R,3R)-2,3-dihydroxy-3-methylpentanoate = (S)-3-methyl-2-oxopentanoate + H2O. Its pathway is amino-acid biosynthesis; L-isoleucine biosynthesis; L-isoleucine from 2-oxobutanoate: step 3/4. It participates in amino-acid biosynthesis; L-valine biosynthesis; L-valine from pyruvate: step 3/4. Functionally, functions in the biosynthesis of branched-chain amino acids. Catalyzes the dehydration of (2R,3R)-2,3-dihydroxy-3-methylpentanoate (2,3-dihydroxy-3-methylvalerate) into 2-oxo-3-methylpentanoate (2-oxo-3-methylvalerate) and of (2R)-2,3-dihydroxy-3-methylbutanoate (2,3-dihydroxyisovalerate) into 2-oxo-3-methylbutanoate (2-oxoisovalerate), the penultimate precursor to L-isoleucine and L-valine, respectively. The chain is Dihydroxy-acid dehydratase from Buchnera aphidicola subsp. Schizaphis graminum (strain Sg).